The sequence spans 937 residues: Isoleucine--tRNA ligase (937 aa).

The short motif at P58–H68 is the 'HIGH' region element. An L-isoleucyl-5'-AMP-binding site is contributed by E561. Residues K602 to S606 carry the 'KMSKS' region motif. K605 provides a ligand contact to ATP. Residues C900, C903, C920, and C923 each coordinate Zn(2+).

The protein belongs to the class-I aminoacyl-tRNA synthetase family. IleS type 1 subfamily. As to quaternary structure, monomer. Zn(2+) serves as cofactor.

It is found in the cytoplasm. It carries out the reaction tRNA(Ile) + L-isoleucine + ATP = L-isoleucyl-tRNA(Ile) + AMP + diphosphate. In terms of biological role, catalyzes the attachment of isoleucine to tRNA(Ile). As IleRS can inadvertently accommodate and process structurally similar amino acids such as valine, to avoid such errors it has two additional distinct tRNA(Ile)-dependent editing activities. One activity is designated as 'pretransfer' editing and involves the hydrolysis of activated Val-AMP. The other activity is designated 'posttransfer' editing and involves deacylation of mischarged Val-tRNA(Ile). The protein is Isoleucine--tRNA ligase of Alcanivorax borkumensis (strain ATCC 700651 / DSM 11573 / NCIMB 13689 / SK2).